The following is a 132-amino-acid chain: Small ribosomal subunit protein uS8 (132 aa).

It belongs to the universal ribosomal protein uS8 family. In terms of assembly, part of the 30S ribosomal subunit. Contacts proteins S5 and S12.

In terms of biological role, one of the primary rRNA binding proteins, it binds directly to 16S rRNA central domain where it helps coordinate assembly of the platform of the 30S subunit. The polypeptide is Small ribosomal subunit protein uS8 (Syntrophotalea carbinolica (strain DSM 2380 / NBRC 103641 / GraBd1) (Pelobacter carbinolicus)).